A 210-amino-acid chain; its full sequence is dTTP/UTP pyrophosphatase (210 aa).

Positions 1–15 (MTHGDNRDGPGRETR) are enriched in basic and acidic residues. A disordered region spans residues 1–22 (MTHGDNRDGPGRETRSSGPLVL). Asp-86 acts as the Proton acceptor in catalysis.

Belongs to the Maf family. YhdE subfamily. Requires a divalent metal cation as cofactor.

The protein resides in the cytoplasm. The enzyme catalyses dTTP + H2O = dTMP + diphosphate + H(+). It carries out the reaction UTP + H2O = UMP + diphosphate + H(+). Nucleoside triphosphate pyrophosphatase that hydrolyzes dTTP and UTP. May have a dual role in cell division arrest and in preventing the incorporation of modified nucleotides into cellular nucleic acids. The sequence is that of dTTP/UTP pyrophosphatase from Rhodospirillum rubrum (strain ATCC 11170 / ATH 1.1.1 / DSM 467 / LMG 4362 / NCIMB 8255 / S1).